A 1165-amino-acid polypeptide reads, in one-letter code: Chitin synthase 3 (1165 aa).

Over 1-170 (MTGLNGDDPD…ETNDTLSFWQ (170 aa)) the chain is Cytoplasmic. Disordered regions lie at residues 19 to 53 (DEES…NNPD) and 74 to 97 (PSST…GSVR). The segment covering 74-92 (PSSTGVNPNATRRSGSLRS) has biased composition (polar residues). Residue Lys136 forms a Glycyl lysine isopeptide (Lys-Gly) (interchain with G-Cter in ubiquitin) linkage. A helical transmembrane segment spans residues 171 to 191 (MYCYFITFWAPAPILAFCGMP). The Extracellular segment spans residues 192–340 (KKERQMAWRE…PNFTVENYAG (149 aa)). N-linked (GlcNAc...) asparagine glycans are attached at residues Asn303 and Asn332. The chain crosses the membrane as a helical span at residues 341–354 (WNCHTSKEDRDAFY). Residues 355–452 (GLKSKADVYF…SKTVGCIASD (98 aa)) are Cytoplasmic-facing. The helical transmembrane segment at 453–473 (VVLYVSLVFILSVVIIKFIIA) threads the bilayer. Topologically, residues 474-891 (CYFRWTVARK…EYYISHHQAK (418 aa)) are extracellular. Ser537 is subject to Phosphoserine. Thr538 is modified (phosphothreonine). A helical membrane pass occupies residues 892 to 910 (AFESVFGSVTCLPGCFSMY). Over 911–1029 (RIKSPKGSDG…SMQFVIGIEL (119 aa)) the chain is Cytoplasmic. The helical transmembrane segment at 1030–1050 (IGTMVLPLAICFTIYVIIFAI) threads the bilayer. Residues 1051–1055 (VSKPT) are Extracellular-facing. Residues 1056-1076 (PVITLVLLAIILGLPGLIVVI) traverse the membrane as a helical segment. Residues 1077–1165 (TATRWSYLWW…RKEESDSFVA (89 aa)) lie on the Cytoplasmic side of the membrane.

Belongs to the chitin synthase family. Class IV subfamily. As to quaternary structure, homodimer. May form higher order oligomers. Seems to interact with BNI4 and SKT5 which link CHS3 to septins. Glycosylated. In terms of processing, palmitoylated by PFA4; required for proper export from the ER.

Its subcellular location is the cell membrane. The protein localises to the bud neck. It is found in the cytoplasmic vesicle membrane. It carries out the reaction [(1-&gt;4)-N-acetyl-beta-D-glucosaminyl](n) + UDP-N-acetyl-alpha-D-glucosamine = [(1-&gt;4)-N-acetyl-beta-D-glucosaminyl](n+1) + UDP + H(+). Its function is as follows. Polymerizes chitin, a structural polymer of the cell wall and septum, by transferring the sugar moiety of UDP-GlcNAc to the non-reducing end of the growing chitin polymer. Appears to be responsible for synthesis of the majority of the chitin found in the cell wall periphery. It is involved in the synthesis of the chitin ring that forms in the cell wall just before bud emergence. This ring remains at the base of the bud as the bud grows and ultimately forms part of the bud scar marking the division site on the mother cell. Also catalyzes the synthesis of chitin laid down during mating and spore cell-wall synthesis. The sequence is that of Chitin synthase 3 from Saccharomyces cerevisiae (strain ATCC 204508 / S288c) (Baker's yeast).